The following is a 115-amino-acid chain: Putative HNH nuclease YajD (115 aa).

The HNH domain maps to 27-75 (CGRCSREFVYSNLRELTVHHIDHDHTNNPEDGSNWELLCLYCHDHEHSK).

Belongs to the HNH nuclease family.

This Salmonella typhi protein is Putative HNH nuclease YajD (yajD).